The sequence spans 432 residues: Vacuolar protein sorting-associated protein 38 (432 aa).

Asparagine 20 carries an N-linked (GlcNAc...) asparagine glycan. Residues 216–287 (LDTYQENIKM…KEAIEKLQKK (72 aa)) adopt a coiled-coil conformation. The chain crosses the membrane as a helical span at residues 348-365 (IINAMLGFYSLFIVIYSY).

It belongs to the VPS38 family. Component of the VPS34 PI3-kinase complex II composed of VPS15, VPS30, VPS34 and VPS38.

It is found in the golgi apparatus. The protein localises to the trans-Golgi network membrane. Its subcellular location is the endosome membrane. Functionally, involved in endosome-to-Golgi retrograde transport as part of the VPS34 PI3-kinase complex II. This complex is required for the endosome-to-Golgi retrieval of PEP1 and KEX2, and the recruitment of VPS5 and VPS7, two components of the retromer complex, to endosomal membranes (probably through generating a specific pool of phosphatidylinositol 3-phosphate allowing the recruitment of the retromer complex proteins to the endosome). Mediates the interaction between VPS30 and the VPS34-VPS15 core complex, leading to the recruitment of VPS30 to the membrane. The chain is Vacuolar protein sorting-associated protein 38 from Candida glabrata (strain ATCC 2001 / BCRC 20586 / JCM 3761 / NBRC 0622 / NRRL Y-65 / CBS 138) (Yeast).